The primary structure comprises 427 residues: Peptidase B (427 aa).

Mn(2+) is bound by residues lysine 195 and aspartate 200. Lysine 207 is an active-site residue. The Mn(2+) site is built by aspartate 218, aspartate 277, and glutamate 279. Arginine 281 is an active-site residue.

It belongs to the peptidase M17 family. Homohexamer. It depends on Mn(2+) as a cofactor.

Its subcellular location is the cytoplasm. It carries out the reaction Release of an N-terminal amino acid, Xaa, from a peptide or arylamide. Xaa is preferably Glu or Asp but may be other amino acids, including Leu, Met, His, Cys and Gln.. Its function is as follows. Probably plays an important role in intracellular peptide degradation. This chain is Peptidase B, found in Escherichia coli (strain ATCC 8739 / DSM 1576 / NBRC 3972 / NCIMB 8545 / WDCM 00012 / Crooks).